Consider the following 132-residue polypeptide: Small ribosomal subunit protein uS12 (132 aa).

The residue at position 89 (Asp89) is a 3-methylthioaspartic acid. Residues 106–132 (GVKDRKKSRSKYGTKKPKEAAKTAAKK) form a disordered region. Positions 109-120 (DRKKSRSKYGTK) are enriched in basic residues.

It belongs to the universal ribosomal protein uS12 family. Part of the 30S ribosomal subunit. Contacts proteins S8 and S17. May interact with IF1 in the 30S initiation complex.

With S4 and S5 plays an important role in translational accuracy. In terms of biological role, interacts with and stabilizes bases of the 16S rRNA that are involved in tRNA selection in the A site and with the mRNA backbone. Located at the interface of the 30S and 50S subunits, it traverses the body of the 30S subunit contacting proteins on the other side and probably holding the rRNA structure together. The combined cluster of proteins S8, S12 and S17 appears to hold together the shoulder and platform of the 30S subunit. The chain is Small ribosomal subunit protein uS12 (rpsL) from Thermus thermophilus (strain ATCC BAA-163 / DSM 7039 / HB27).